We begin with the raw amino-acid sequence, 67 residues long: Phycobilisome 7.8 kDa linker polypeptide, allophycocyanin-associated, core (67 aa).

One can recognise a CpcD-like domain in the interval 1–56 (MRMFRITACVPSQTRIRTQRELQNTYFTKLVPYDNWFREQQRIMKMGGKIVKVELA).

The protein belongs to the phycobilisome linker protein family.

The protein resides in the cellular thylakoid membrane. Functionally, rod linker protein, associated with allophycocyanin. Linker polypeptides determine the state of aggregation and the location of the disk-shaped phycobiliprotein units within the phycobilisome and modulate their spectroscopic properties in order to mediate a directed and optimal energy transfer. This chain is Phycobilisome 7.8 kDa linker polypeptide, allophycocyanin-associated, core (apcC), found in Synechocystis sp. (strain PCC 6714) (Aphanocapsa sp. (strain PCC 6714)).